A 267-amino-acid polypeptide reads, in one-letter code: MKKIYYKNHLIKKKWSQVFLKDQNVIDTIVKTINPKKHQKILEIGPGLGALTKQILNIADLDSLILIERDSNLVNRLVQMFNKKINILHQDIMTTNFFDLSHKVGQKLRLIGNLPYNIATELIVYLFQYTNVIYDMHFMFQKEVATRLYANPNKKEYGRLSIITQYHCKVVPLLTIPATSFFPIPKVESMVMRLLPHTNTPYPIVNIGKLSSLTKLAFRQRRKTLRNSLSTFFNETEITQKGINPALRAENITINQYCTLANMLNNK.

S-adenosyl-L-methionine contacts are provided by Leu-20, Gly-45, Glu-68, Asp-91, and Asn-113.

This sequence belongs to the class I-like SAM-binding methyltransferase superfamily. rRNA adenine N(6)-methyltransferase family. RsmA subfamily.

It localises to the cytoplasm. The enzyme catalyses adenosine(1518)/adenosine(1519) in 16S rRNA + 4 S-adenosyl-L-methionine = N(6)-dimethyladenosine(1518)/N(6)-dimethyladenosine(1519) in 16S rRNA + 4 S-adenosyl-L-homocysteine + 4 H(+). In terms of biological role, specifically dimethylates two adjacent adenosines (A1518 and A1519) in the loop of a conserved hairpin near the 3'-end of 16S rRNA in the 30S particle. May play a critical role in biogenesis of 30S subunits. The sequence is that of Ribosomal RNA small subunit methyltransferase A from Blochmanniella pennsylvanica (strain BPEN).